The following is a 304-amino-acid chain: Glutaminase (304 aa).

Residues Ser-63, Asn-114, Glu-158, Asn-165, Tyr-189, Tyr-240, and Val-258 each coordinate substrate.

Belongs to the glutaminase family. In terms of assembly, homotetramer.

It catalyses the reaction L-glutamine + H2O = L-glutamate + NH4(+). This chain is Glutaminase, found in Shewanella putrefaciens (strain CN-32 / ATCC BAA-453).